The following is a 283-amino-acid chain: Large ribosomal subunit protein mL46 (283 aa).

At lysine 217 the chain carries N6-succinyllysine. Lysine 228 is modified (N6-acetyllysine). An N6-succinyllysine modification is found at lysine 246.

The protein belongs to the mitochondrion-specific ribosomal protein mL46 family. In terms of assembly, component of the mitochondrial ribosome large subunit (39S) which comprises a 16S rRNA and about 50 distinct proteins.

It is found in the mitochondrion. This Mus musculus (Mouse) protein is Large ribosomal subunit protein mL46 (Mrpl46).